The primary structure comprises 309 residues: Porphobilinogen deaminase (309 aa).

Cys244 is subject to S-(dipyrrolylmethanemethyl)cysteine.

Belongs to the HMBS family. As to quaternary structure, monomer. Dipyrromethane is required as a cofactor.

The catalysed reaction is 4 porphobilinogen + H2O = hydroxymethylbilane + 4 NH4(+). Its pathway is porphyrin-containing compound metabolism; protoporphyrin-IX biosynthesis; coproporphyrinogen-III from 5-aminolevulinate: step 2/4. Its function is as follows. Tetrapolymerization of the monopyrrole PBG into the hydroxymethylbilane pre-uroporphyrinogen in several discrete steps. This chain is Porphobilinogen deaminase, found in Listeria monocytogenes serotype 4a (strain HCC23).